A 222-amino-acid chain; its full sequence is Salivary anticoagulant protein P23 (222 aa).

The signal sequence occupies residues 1–17; the sequence is MLTVSLLTLSLAAYASA. Asn56, Asn73, Asn109, and Asn114 each carry an N-linked (GlcNAc...) asparagine glycan.

In terms of tissue distribution, salivary gland (at protein level). Adult midgut.

Its subcellular location is the secreted. Inhibits host coagulation by delaying thrombin generation and reducing endogenous thrombin potential (ETP). This is Salivary anticoagulant protein P23 from Ixodes scapularis (Black-legged tick).